Consider the following 137-residue polypeptide: Small ribosomal subunit protein eS6 (137 aa).

Acidic residues predominate over residues 114–127 (LPVEEAPAEDAPES). The tract at residues 114-137 (LPVEEAPAEDAPESAEEKSEDKKE) is disordered. The span at 128–137 (AEEKSEDKKE) shows a compositional bias: basic and acidic residues.

The protein belongs to the eukaryotic ribosomal protein eS6 family.

The sequence is that of Small ribosomal subunit protein eS6 from Nitrosopumilus maritimus (strain SCM1).